Reading from the N-terminus, the 267-residue chain is Proteasome assembly chaperone 2 (267 aa).

Belongs to the PSMG2 family. As to quaternary structure, component of the 20S proteasome chaperone. Forms a heterodimer with PBA1 that binds to proteasome precursors.

The protein resides in the cytoplasm. Involved in 20S proteasome assembly. Required for maximal proteasome activity. Affects the chymotrypsin-like activity of the proteasome. Can be degraded by the proteasome. Involved in the endoplasmic reticulum-associated degradation (ERAD). The protein is Proteasome assembly chaperone 2 (ADD66) of Saccharomyces cerevisiae (strain ATCC 204508 / S288c) (Baker's yeast).